The chain runs to 258 residues: Sugar fermentation stimulation protein homolog (258 aa).

This sequence belongs to the SfsA family.

The polypeptide is Sugar fermentation stimulation protein homolog (Marinomonas sp. (strain MWYL1)).